The chain runs to 120 residues: MLRFTDEHEWLRLDGDVATVGITAHAAEQLGDLVFVELPKVGAKLTKGEAAAVVESVKAASDVYAPLSGEVTEVNEAAVADPASVGTDPQGDGWLYRLKLDDASAMDGLMDEAAYAAFAK.

Positions 17–99 (VATVGITAHA…QGDGWLYRLK (83 aa)) constitute a Lipoyl-binding domain. K58 is subject to N6-lipoyllysine.

This sequence belongs to the GcvH family. In terms of assembly, the glycine cleavage system is composed of four proteins: P, T, L and H. The cofactor is (R)-lipoate.

The glycine cleavage system catalyzes the degradation of glycine. The H protein shuttles the methylamine group of glycine from the P protein to the T protein. The protein is Glycine cleavage system H protein of Methylorubrum extorquens (strain PA1) (Methylobacterium extorquens).